The sequence spans 128 residues: Sm-like protein LSM1A (128 aa).

In terms of domain architecture, Sm spans 10 to 85 (FFSTSLAAYL…VVLIGELDVE (76 aa)).

This sequence belongs to the snRNP Sm proteins family. As to quaternary structure, component of the heptameric LSM1-LSM7 complex that forms a seven-membered ring structure with a donut shape. The LSM subunits are arranged in the order LSM1, LSM2, LSM3, LSM6, LSM5, LSM7 and LSM4. LSM1A subunit interacts only with its two neighboring subunits, LSM2 and LSM4. As to expression, expressed in roots, leaves, stems, flowers and siliques.

Its subcellular location is the cytoplasm. The protein resides in the P-body. Component of the cytoplasmic LSM1-LSM7 complex which is involved in mRNA degradation by promoting decapping and leading to accurate 5'-3' mRNA decay. LSM1A and LSM1B are essential for the formation of the cytoplasmic LSM1-LSM7 complex which regulates developmental gene expression by the decapping of specific development-related transcripts. Required for P-body formation during heat stress. In Arabidopsis thaliana (Mouse-ear cress), this protein is Sm-like protein LSM1A.